Reading from the N-terminus, the 314-residue chain is MSRPRRRGRDIHGVLLLDKPQGMSSNDVLQKVKRIYNANRAGHTGALDPLATGMLPICLGEATKFSQYLLDSDKRYRVIARLGQRTDTSDADGQIVQERPVTFSAEQLAAALETFRGDIEQIPSMYSALKYQGKKLYEYARQGIEVPREARPITVYELLFIRHEGDELELEVHCSKGTYIRTIIDDLGEKLGCGAHVIFLRRLAVSKYPVDRMVTLEQLRELVEQAERQDIPAAQLLDPLLMPMDSPASDYPVVNLPLTSSVYFKNGNPVRTTGVPLEGLVRVTEGDDEKFIGMGEIDDEGRVAPRRLVVEYPA.

His43 contributes to the substrate binding site. The active-site Nucleophile is the Asp48. Residues Tyr76, Tyr179, and Leu200 each coordinate substrate.

Belongs to the pseudouridine synthase TruB family. Type 1 subfamily.

The enzyme catalyses uridine(55) in tRNA = pseudouridine(55) in tRNA. Its function is as follows. Responsible for synthesis of pseudouridine from uracil-55 in the psi GC loop of transfer RNAs. This chain is tRNA pseudouridine synthase B, found in Citrobacter koseri (strain ATCC BAA-895 / CDC 4225-83 / SGSC4696).